Consider the following 221-residue polypeptide: Probable septum site-determining protein MinC (221 aa).

The protein belongs to the MinC family. Interacts with MinD and FtsZ.

In terms of biological role, cell division inhibitor that blocks the formation of polar Z ring septums. Rapidly oscillates between the poles of the cell to destabilize FtsZ filaments that have formed before they mature into polar Z rings. Prevents FtsZ polymerization. The chain is Probable septum site-determining protein MinC from Shewanella sp. (strain ANA-3).